The following is a 358-amino-acid chain: Chorismate synthase (358 aa).

NADP(+)-binding residues include R46 and R52. Residues 123-125 (RSS), 239-240 (NA), G283, 298-302 (KSVAT), and R324 each bind FMN.

The protein belongs to the chorismate synthase family. As to quaternary structure, homotetramer. It depends on FMNH2 as a cofactor.

It carries out the reaction 5-O-(1-carboxyvinyl)-3-phosphoshikimate = chorismate + phosphate. It functions in the pathway metabolic intermediate biosynthesis; chorismate biosynthesis; chorismate from D-erythrose 4-phosphate and phosphoenolpyruvate: step 7/7. Its function is as follows. Catalyzes the anti-1,4-elimination of the C-3 phosphate and the C-6 proR hydrogen from 5-enolpyruvylshikimate-3-phosphate (EPSP) to yield chorismate, which is the branch point compound that serves as the starting substrate for the three terminal pathways of aromatic amino acid biosynthesis. This reaction introduces a second double bond into the aromatic ring system. The sequence is that of Chorismate synthase from Parabacteroides distasonis (strain ATCC 8503 / DSM 20701 / CIP 104284 / JCM 5825 / NCTC 11152).